We begin with the raw amino-acid sequence, 204 residues long: DNA-directed RNA polymerase III subunit RPC8 (204 aa).

Residues 158–178 (VDTSPTGPSSAEAASSSEELP) are disordered. A compositionally biased stretch (low complexity) spans 166–175 (SSAEAASSSE).

This sequence belongs to the eukaryotic RPB7/RPC8 RNA polymerase subunit family. In terms of assembly, component of the RNA polymerase III complex consisting of 17 subunits: a ten-subunit horseshoe-shaped catalytic core composed of POLR3A/RPC1, POLR3B/RPC2, POLR1C/RPAC1, POLR1D/RPAC2, POLR3K/RPC10, POLR2E/RPABC1, POLR2F/RPABC2, POLR2H/RPABC3, POLR2K/RPABC4 and POLR2L/RPABC5; a mobile stalk composed of two subunits POLR3H/RPC8 and CRCP/RPC9, protruding from the core and functioning primarily in transcription initiation; and additional subunits homologous to general transcription factors of the RNA polymerase II machinery, POLR3C/RPC3-POLR3F/RPC6-POLR3G/RPC7 heterotrimer required for transcription initiation and POLR3D/RPC4-POLR3E/RPC5 heterodimer involved in both transcription initiation and termination. Interacts with CRCP/RPC9. POLR3H/RPC8 and CRCP/RPC9 probably form a Pol III subcomplex.

It localises to the nucleus. Its function is as follows. DNA-dependent RNA polymerase catalyzes the transcription of DNA into RNA using the four ribonucleoside triphosphates as substrates. Specific peripheric component of RNA polymerase III (Pol III) which synthesizes small non-coding RNAs including 5S rRNA, snRNAs, tRNAs and miRNAs from at least 500 distinct genomic loci. With CRCP/RPC9 forms a mobile stalk that protrudes from Pol III core and functions primarily in transcription initiation. Pol III plays a key role in sensing and limiting infection by intracellular bacteria and DNA viruses. Acts as nuclear and cytosolic DNA sensor involved in innate immune response. Can sense non-self dsDNA that serves as template for transcription into dsRNA. The non-self RNA polymerase III transcripts, such as Epstein-Barr virus-encoded RNAs (EBERs) induce type I interferon and NF-kappa-B through the RIG-I pathway. This chain is DNA-directed RNA polymerase III subunit RPC8 (POLR3H), found in Bos taurus (Bovine).